A 189-amino-acid chain; its full sequence is HGPRTase-like protein (189 aa).

Belongs to the purine/pyrimidine phosphoribosyltransferase family. Archaeal HPRT subfamily.

In terms of biological role, may catalyze a purine salvage reaction, the substrate is unknown. The chain is HGPRTase-like protein from Halorhabdus utahensis (strain DSM 12940 / JCM 11049 / AX-2).